Here is a 431-residue protein sequence, read N- to C-terminus: Enolase (431 aa).

A (2R)-2-phosphoglycerate-binding site is contributed by glutamine 162. The active-site Proton donor is glutamate 204. Mg(2+)-binding residues include aspartate 241, glutamate 288, and aspartate 315. 4 residues coordinate (2R)-2-phosphoglycerate: lysine 340, arginine 369, serine 370, and lysine 391. Residue lysine 340 is the Proton acceptor of the active site.

This sequence belongs to the enolase family. Requires Mg(2+) as cofactor.

The protein localises to the cytoplasm. Its subcellular location is the secreted. The protein resides in the cell surface. It carries out the reaction (2R)-2-phosphoglycerate = phosphoenolpyruvate + H2O. It participates in carbohydrate degradation; glycolysis; pyruvate from D-glyceraldehyde 3-phosphate: step 4/5. In terms of biological role, catalyzes the reversible conversion of 2-phosphoglycerate (2-PG) into phosphoenolpyruvate (PEP). It is essential for the degradation of carbohydrates via glycolysis. This chain is Enolase, found in Phocaeicola vulgatus (strain ATCC 8482 / DSM 1447 / JCM 5826 / CCUG 4940 / NBRC 14291 / NCTC 11154) (Bacteroides vulgatus).